Here is a 359-residue protein sequence, read N- to C-terminus: Phospho-N-acetylmuramoyl-pentapeptide-transferase (359 aa).

The next 10 membrane-spanning stretches (helical) occupy residues 3–23, 55–75, 80–100, 117–137, 156–176, 187–207, 231–251, 255–275, 280–300, and 334–354; these read QILI…PALI, VAII…GLAF, ISAS…VGFL, TAKT…ALGF, IATV…VVSA, LDGL…LITF, LAIV…WNAA, IFMG…ISVT, ILAV…VLQI, and FWLL…GEWL.

It belongs to the glycosyltransferase 4 family. MraY subfamily. Mg(2+) serves as cofactor.

The protein resides in the cell membrane. The catalysed reaction is UDP-N-acetyl-alpha-D-muramoyl-L-alanyl-gamma-D-glutamyl-meso-2,6-diaminopimeloyl-D-alanyl-D-alanine + di-trans,octa-cis-undecaprenyl phosphate = di-trans,octa-cis-undecaprenyl diphospho-N-acetyl-alpha-D-muramoyl-L-alanyl-D-glutamyl-meso-2,6-diaminopimeloyl-D-alanyl-D-alanine + UMP. It participates in cell wall biogenesis; peptidoglycan biosynthesis. Functionally, catalyzes the initial step of the lipid cycle reactions in the biosynthesis of the cell wall peptidoglycan: transfers peptidoglycan precursor phospho-MurNAc-pentapeptide from UDP-MurNAc-pentapeptide onto the lipid carrier undecaprenyl phosphate, yielding undecaprenyl-pyrophosphoryl-MurNAc-pentapeptide, known as lipid I. This is Phospho-N-acetylmuramoyl-pentapeptide-transferase from Mycolicibacterium paratuberculosis (strain ATCC BAA-968 / K-10) (Mycobacterium paratuberculosis).